Reading from the N-terminus, the 675-residue chain is Gastrula zinc finger protein xFG20-1 (675 aa).

10 C2H2-type zinc fingers span residues 62–84 (FTCT…IRAH), 90–112 (FSCM…YSVH), 118–140 (FSCT…LRVH), 146–168 (YSCE…QRTH), 174–196 (FSCT…LKTH), 202–224 (HLCA…QKIH), 257–279 (FPCT…QSTH), 286–308 (FPCT…QSTH), 344–366 (LPCT…QSTH), and 373–395 (LPCT…QSTH). The interval 302-325 (RTHQSTHTEGQKSLPSTESGGTFS) is disordered. A compositionally biased stretch (polar residues) spans 304 to 325 (HQSTHTEGQKSLPSTESGGTFS). Positions 390–407 (THQSTHTSPSTEFGVQTT) are enriched in polar residues. Residues 390–423 (THQSTHTSPSTEFGVQTTEDNHQSPSKDHTGEKP) are disordered. Over residues 408–421 (EDNHQSPSKDHTGE) the composition is skewed to basic and acidic residues. 8 consecutive C2H2-type zinc fingers follow at residues 424 to 446 (FSCS…LVVH), 452 to 474 (YHCI…QRTH), 480 to 501 (FSCN…YRVH), 507 to 529 (YPCT…YKVH), 535 to 557 (YPCQ…LRTH), 563 to 585 (FSCT…LTTH), 591 to 613 (FSCT…YKMH), and 619 to 642 (FTCT…TTVH).

It belongs to the krueppel C2H2-type zinc-finger protein family.

It localises to the nucleus. May be involved in transcriptional regulation. This chain is Gastrula zinc finger protein xFG20-1, found in Xenopus laevis (African clawed frog).